A 427-amino-acid chain; its full sequence is Enolase (427 aa).

Q163 contributes to the (2R)-2-phosphoglycerate binding site. E205 (proton donor) is an active-site residue. Residues D242, E285, and D312 each contribute to the Mg(2+) site. (2R)-2-phosphoglycerate contacts are provided by K337, R366, S367, and K388. Residue K337 is the Proton acceptor of the active site.

The protein belongs to the enolase family. It depends on Mg(2+) as a cofactor.

The protein resides in the cytoplasm. It is found in the secreted. Its subcellular location is the cell surface. The catalysed reaction is (2R)-2-phosphoglycerate = phosphoenolpyruvate + H2O. It functions in the pathway carbohydrate degradation; glycolysis; pyruvate from D-glyceraldehyde 3-phosphate: step 4/5. Its function is as follows. Catalyzes the reversible conversion of 2-phosphoglycerate (2-PG) into phosphoenolpyruvate (PEP). It is essential for the degradation of carbohydrates via glycolysis. This Leptothrix cholodnii (strain ATCC 51168 / LMG 8142 / SP-6) (Leptothrix discophora (strain SP-6)) protein is Enolase.